The chain runs to 365 residues: Protein mab-21-like (365 aa).

It belongs to the mab-21 family.

This is Protein mab-21-like from Aedes aegypti (Yellowfever mosquito).